Consider the following 307-residue polypeptide: Probable GTP 3',8-cyclase (307 aa).

Residues 5-227 (AYGRRISSLR…RRTKYYLGGA (223 aa)) enclose the Radical SAM core domain. Arg-14 provides a ligand contact to GTP. Positions 21 and 25 each coordinate [4Fe-4S] cluster. Tyr-27 is a binding site for S-adenosyl-L-methionine. Cys-28 contacts [4Fe-4S] cluster. Lys-61 serves as a coordination point for GTP. Gly-65 serves as a coordination point for S-adenosyl-L-methionine. Residue Thr-89 coordinates GTP. Ser-113 serves as a coordination point for S-adenosyl-L-methionine. Lys-151 serves as a coordination point for GTP. Positions 241 and 244 each coordinate [4Fe-4S] cluster. 246 to 248 (RLR) contacts GTP. Residue Cys-258 coordinates [4Fe-4S] cluster.

Belongs to the radical SAM superfamily. MoaA family. The cofactor is [4Fe-4S] cluster.

It catalyses the reaction GTP + AH2 + S-adenosyl-L-methionine = (8S)-3',8-cyclo-7,8-dihydroguanosine 5'-triphosphate + 5'-deoxyadenosine + L-methionine + A + H(+). It functions in the pathway cofactor biosynthesis; molybdopterin biosynthesis. Catalyzes the cyclization of GTP to (8S)-3',8-cyclo-7,8-dihydroguanosine 5'-triphosphate. The protein is Probable GTP 3',8-cyclase of Methanocella arvoryzae (strain DSM 22066 / NBRC 105507 / MRE50).